Consider the following 591-residue polypeptide: Melatonin-related receptor (591 aa).

Topologically, residues 1–38 are extracellular; that stretch reads MATVPKSNMGPTKAVPTPFGCIGCKLPKPDYPPALIIF. Residues 39–59 traverse the membrane as a helical segment; that stretch reads MFCAMVITVVVDLIGNSMVIL. Residues 60-72 are Cytoplasmic-facing; it reads AVTKNKKLRNSGN. A helical transmembrane segment spans residues 73–93; it reads IFVASLSVADMLVAIYPYPLM. The Extracellular segment spans residues 94–111; that stretch reads LYAMSVGGWDLSQLQCQM. Residues Cys-109 and Cys-186 are joined by a disulfide bond. Residues 112-132 form a helical membrane-spanning segment; it reads VGLVTGLSVVGSIFNITAIAI. At 133 to 151 the chain is on the cytoplasmic side; the sequence is NRYCYICHSLQYKRIFSLR. A helical transmembrane segment spans residues 152–172; sequence NTCIYLVVTWVMTVLAVLPNM. Residues 173 to 196 lie on the Extracellular side of the membrane; the sequence is YIGTIEYDPRTYTCIFNYVNNPAF. A helical transmembrane segment spans residues 197 to 217; sequence TVTIVCIHFVLPLIIVGYCYT. Over 218–247 the chain is Cytoplasmic; sequence KIWIKVLAARDPAGQNPDNQFAEVRNFLTM. The helical transmembrane segment at 248-268 threads the bilayer; sequence FVIFLLFAVCWCPVNVLTVLV. Over 269 to 281 the chain is Extracellular; the sequence is AVIPKEMAGKIPN. Residues 282–302 traverse the membrane as a helical segment; sequence WLYLAAYCIAYFNSCLNAIIY. Over 303–591 the chain is Cytoplasmic; the sequence is GILNESFRRE…DSDCSDEMAV (289 aa). The tract at residues 378–427 is disordered; sequence LPGDASAPHSDRASVRPKPQTRSTSVYRKPASIHHKSISGHPKSASVYPK.

This sequence belongs to the G-protein coupled receptor 1 family. In terms of assembly, homodimer, and heterodimer with MTNR1A and MTNR1B. Interacts with KAT5. Interacts with RTN4 isoform A/NOGO-A. Interacts with TGFBR1. As to expression, strongly expressed in the brain with highly restricted pattern of expression, confined to a subset of the ependymal cells of the third ventricle and a population of cells in the dorsomedial hypothalamic nucleus.

It is found in the cell membrane. The protein resides in the postsynaptic density. Its function is as follows. G protein-coupled receptor that plays a role in numerous physiological processes including regulation of energy metabolism, neurite outgrowth or cell migration. Promotes self-renewal and neuronal differentiation of neural progenitor cells through activation of the NOTCH and WNT/beta-catenin signaling pathways. Modulates the KAT5-dependent glucocorticoid receptor signaling by modulating KAT5 subcellular compartmentalisation. Also plays a role in the activation TGFBR1 in the absence of TGFBR2 by interfering with FKBP1A binding to TGFBR1, leading to induction of both canonical and non-canonical SMAD signaling pathways resulting in inhibition of proliferation or promotion of migration. This chain is Melatonin-related receptor (Gpr50), found in Mus musculus (Mouse).